We begin with the raw amino-acid sequence, 311 residues long: Bifunctional protein FolD (311 aa).

174–176 serves as a coordination point for NADP(+); that stretch reads GKG.

The protein belongs to the tetrahydrofolate dehydrogenase/cyclohydrolase family. As to quaternary structure, homodimer.

It carries out the reaction (6R)-5,10-methylene-5,6,7,8-tetrahydrofolate + NADP(+) = (6R)-5,10-methenyltetrahydrofolate + NADPH. It catalyses the reaction (6R)-5,10-methenyltetrahydrofolate + H2O = (6R)-10-formyltetrahydrofolate + H(+). Its pathway is one-carbon metabolism; tetrahydrofolate interconversion. Catalyzes the oxidation of 5,10-methylenetetrahydrofolate to 5,10-methenyltetrahydrofolate and then the hydrolysis of 5,10-methenyltetrahydrofolate to 10-formyltetrahydrofolate. This is Bifunctional protein FolD from Pyrobaculum arsenaticum (strain DSM 13514 / JCM 11321 / PZ6).